A 293-amino-acid polypeptide reads, in one-letter code: Protease HtpX (293 aa).

The next 2 helical transmembrane spans lie at 4–24 (IALF…VLSL) and 34–54 (GLLI…LLMS). H139 serves as a coordination point for Zn(2+). Residue E140 is part of the active site. Zn(2+) is bound at residue H143. A run of 2 helical transmembrane segments spans residues 158–178 (VVNT…AGFL) and 193–213 (LIYF…ASII). A Zn(2+)-binding site is contributed by E222.

It belongs to the peptidase M48B family. It depends on Zn(2+) as a cofactor.

Its subcellular location is the cell inner membrane. The polypeptide is Protease HtpX (Salmonella agona (strain SL483)).